A 232-amino-acid chain; its full sequence is MPALLPSLTEINAQLADQAATQIIQWAATEFGSGLVLSTSFGIQSAVMLHLATQVQPDIPVIWIDTGYLPTETYRFAAELTERLKLNLKVYQSEISPARMEALYGRLWESESVEDFNRYDQMRKVEPMNRALQELGATAWLSGVRRQQTAHRQSMEIVELKRDRYAIRPILGWHSRDVYQYLTAHDLPYHPLFDQGYVTVGDWHSSRPLQADDSDERSTRFRGLKQECGLHL.

Cys-228 (nucleophile; cysteine thiosulfonate intermediate) is an active-site residue.

The protein belongs to the PAPS reductase family. CysH subfamily.

It is found in the cytoplasm. It carries out the reaction [thioredoxin]-disulfide + sulfite + adenosine 3',5'-bisphosphate + 2 H(+) = [thioredoxin]-dithiol + 3'-phosphoadenylyl sulfate. The protein operates within sulfur metabolism; hydrogen sulfide biosynthesis; sulfite from sulfate: step 3/3. Its function is as follows. Catalyzes the formation of sulfite from phosphoadenosine 5'-phosphosulfate (PAPS) using thioredoxin as an electron donor. This is Phosphoadenosine 5'-phosphosulfate reductase from Synechococcus sp. (strain ATCC 27144 / PCC 6301 / SAUG 1402/1) (Anacystis nidulans).